Reading from the N-terminus, the 559-residue chain is Urocanate hydratase (559 aa).

NAD(+)-binding positions include Gly53–Gly54, Gln131, Gly177–Gly179, Glu197, Arg202, Asn243–Ala244, Gln264–His268, Tyr274–Leu275, and Tyr323. Cys411 is an active-site residue. Gly493 contributes to the NAD(+) binding site.

It belongs to the urocanase family. It depends on NAD(+) as a cofactor.

It is found in the cytoplasm. The enzyme catalyses 4-imidazolone-5-propanoate = trans-urocanate + H2O. It functions in the pathway amino-acid degradation; L-histidine degradation into L-glutamate; N-formimidoyl-L-glutamate from L-histidine: step 2/3. Functionally, catalyzes the conversion of urocanate to 4-imidazolone-5-propionate. This Pseudomonas aeruginosa (strain ATCC 15692 / DSM 22644 / CIP 104116 / JCM 14847 / LMG 12228 / 1C / PRS 101 / PAO1) protein is Urocanate hydratase.